A 419-amino-acid chain; its full sequence is L-rhamnose isomerase (419 aa).

Positions 262, 294, and 296 each coordinate Mn(2+).

The protein belongs to the rhamnose isomerase family. As to quaternary structure, homotetramer. It depends on Mn(2+) as a cofactor.

Its subcellular location is the cytoplasm. The catalysed reaction is L-rhamnopyranose = L-rhamnulose. Its pathway is carbohydrate degradation; L-rhamnose degradation; glycerone phosphate from L-rhamnose: step 1/3. In terms of biological role, catalyzes the interconversion of L-rhamnose and L-rhamnulose. This is L-rhamnose isomerase from Salmonella choleraesuis (strain SC-B67).